The following is a 660-amino-acid chain: Bifunctional polymyxin resistance protein ArnA (660 aa).

The segment at Met-1–Leu-304 is formyltransferase ArnAFT. His-86–Ile-88 lines the (6R)-10-formyltetrahydrofolate pocket. Catalysis depends on His-104, which acts as the Proton donor; for formyltransferase activity. Residues Arg-114 and Val-136 to Asp-140 contribute to the (6R)-10-formyltetrahydrofolate site. A dehydrogenase ArnADH region spans residues Arg-314–Ser-660. NAD(+) is bound by residues Asp-347 and Asp-368–Ile-369. UDP-alpha-D-glucuronate is bound by residues Ala-393, Tyr-398, and Thr-432 to Ser-433. The active-site Proton acceptor; for decarboxylase activity is Glu-434. UDP-alpha-D-glucuronate-binding positions include Arg-460, Asn-492, Lys-526–Arg-535, and Tyr-613. Residue Arg-619 is the Proton donor; for decarboxylase activity of the active site.

It in the N-terminal section; belongs to the Fmt family. UDP-L-Ara4N formyltransferase subfamily. In the C-terminal section; belongs to the NAD(P)-dependent epimerase/dehydratase family. UDP-glucuronic acid decarboxylase subfamily. As to quaternary structure, homohexamer, formed by a dimer of trimers.

The enzyme catalyses UDP-alpha-D-glucuronate + NAD(+) = UDP-beta-L-threo-pentopyranos-4-ulose + CO2 + NADH. It catalyses the reaction UDP-4-amino-4-deoxy-beta-L-arabinose + (6R)-10-formyltetrahydrofolate = UDP-4-deoxy-4-formamido-beta-L-arabinose + (6S)-5,6,7,8-tetrahydrofolate + H(+). The protein operates within nucleotide-sugar biosynthesis; UDP-4-deoxy-4-formamido-beta-L-arabinose biosynthesis; UDP-4-deoxy-4-formamido-beta-L-arabinose from UDP-alpha-D-glucuronate: step 1/3. It functions in the pathway nucleotide-sugar biosynthesis; UDP-4-deoxy-4-formamido-beta-L-arabinose biosynthesis; UDP-4-deoxy-4-formamido-beta-L-arabinose from UDP-alpha-D-glucuronate: step 3/3. It participates in bacterial outer membrane biogenesis; lipopolysaccharide biosynthesis. Functionally, bifunctional enzyme that catalyzes the oxidative decarboxylation of UDP-glucuronic acid (UDP-GlcUA) to UDP-4-keto-arabinose (UDP-Ara4O) and the addition of a formyl group to UDP-4-amino-4-deoxy-L-arabinose (UDP-L-Ara4N) to form UDP-L-4-formamido-arabinose (UDP-L-Ara4FN). The modified arabinose is attached to lipid A and is required for resistance to polymyxin and cationic antimicrobial peptides. The polypeptide is Bifunctional polymyxin resistance protein ArnA (Escherichia coli O1:K1 / APEC).